A 590-amino-acid polypeptide reads, in one-letter code: Putative histone-lysine N-methyltransferase PRDM6 (590 aa).

Residues 25–87 (QLFPHGGGGP…STPASSSTSA (63 aa)) form a disordered region. Positions 29–42 (HGGGGPLKGGGAAG) are enriched in gly residues. Residues 71-87 (ASLSSASSTPASSSTSA) show a composition bias toward low complexity. In terms of domain architecture, SET spans 241–360 (REVCLCTSTV…RGTELLVWYN (120 aa)). The C2H2-type 1; degenerate zinc finger occupies 468 to 490 (WKCGQCFKTFTQRILLQMHVCTQ). 2 consecutive C2H2-type zinc fingers follow at residues 496-518 (YQCG…VVTH) and 524-546 (FKCG…IRTH). Residues 552–574 (FKCERCERSFTQATQLSRHQRMP) form a C2H2-type 4; degenerate zinc finger.

This sequence belongs to the class V-like SAM-binding methyltransferase superfamily. Interacts with HDAC1, HDAC2, HDAC3, CBX1 and EP300.

It localises to the nucleus. It catalyses the reaction L-lysyl(20)-[histone H4] + S-adenosyl-L-methionine = N(6)-methyl-L-lysyl(20)-[histone H4] + S-adenosyl-L-homocysteine + H(+). Functionally, putative histone methyltransferase that acts as a transcriptional repressor of smooth muscle gene expression. Promotes the transition from differentiated to proliferative smooth muscle by suppressing differentiation and maintaining the proliferative potential of vascular smooth muscle cells. Also plays a role in endothelial cells by inhibiting endothelial cell proliferation, survival and differentiation. It is unclear whether it has histone methyltransferase activity in vivo. According to some authors, it does not act as a histone methyltransferase by itself and represses transcription by recruiting EHMT2/G9a. According to others, it possesses histone methyltransferase activity when associated with other proteins and specifically methylates 'Lys-20' of histone H4 in vitro. 'Lys-20' methylation represents a specific tag for epigenetic transcriptional repression. This chain is Putative histone-lysine N-methyltransferase PRDM6 (PRDM6), found in Bos taurus (Bovine).